Consider the following 147-residue polypeptide: UPF0735 ACT domain-containing protein BH1214 (147 aa).

An ACT domain is found at 70–145 (TLSINLEDRS…AVEKVELVGS (76 aa)).

The protein belongs to the UPF0735 family.

The sequence is that of UPF0735 ACT domain-containing protein BH1214 from Halalkalibacterium halodurans (strain ATCC BAA-125 / DSM 18197 / FERM 7344 / JCM 9153 / C-125) (Bacillus halodurans).